Consider the following 264-residue polypeptide: Thymidylate synthase (264 aa).

Residue Arg21 participates in dUMP binding. (6R)-5,10-methylene-5,6,7,8-tetrahydrofolate is bound at residue His51. 126-127 (RR) serves as a coordination point for dUMP. Residue Cys146 is the Nucleophile of the active site. DUMP is bound by residues 166–169 (RSAD), Asn177, and 207–209 (HIY). A (6R)-5,10-methylene-5,6,7,8-tetrahydrofolate-binding site is contributed by Asp169. Ala263 is a binding site for (6R)-5,10-methylene-5,6,7,8-tetrahydrofolate.

This sequence belongs to the thymidylate synthase family. Bacterial-type ThyA subfamily. In terms of assembly, homodimer.

It localises to the cytoplasm. It catalyses the reaction dUMP + (6R)-5,10-methylene-5,6,7,8-tetrahydrofolate = 7,8-dihydrofolate + dTMP. It participates in pyrimidine metabolism; dTTP biosynthesis. In terms of biological role, catalyzes the reductive methylation of 2'-deoxyuridine-5'-monophosphate (dUMP) to 2'-deoxythymidine-5'-monophosphate (dTMP) while utilizing 5,10-methylenetetrahydrofolate (mTHF) as the methyl donor and reductant in the reaction, yielding dihydrofolate (DHF) as a by-product. This enzymatic reaction provides an intracellular de novo source of dTMP, an essential precursor for DNA biosynthesis. This chain is Thymidylate synthase, found in Ruthia magnifica subsp. Calyptogena magnifica.